A 158-amino-acid chain; its full sequence is SsrA-binding protein (158 aa).

It belongs to the SmpB family.

Its subcellular location is the cytoplasm. Required for rescue of stalled ribosomes mediated by trans-translation. Binds to transfer-messenger RNA (tmRNA), required for stable association of tmRNA with ribosomes. tmRNA and SmpB together mimic tRNA shape, replacing the anticodon stem-loop with SmpB. tmRNA is encoded by the ssrA gene; the 2 termini fold to resemble tRNA(Ala) and it encodes a 'tag peptide', a short internal open reading frame. During trans-translation Ala-aminoacylated tmRNA acts like a tRNA, entering the A-site of stalled ribosomes, displacing the stalled mRNA. The ribosome then switches to translate the ORF on the tmRNA; the nascent peptide is terminated with the 'tag peptide' encoded by the tmRNA and targeted for degradation. The ribosome is freed to recommence translation, which seems to be the essential function of trans-translation. In Caldanaerobacter subterraneus subsp. tengcongensis (strain DSM 15242 / JCM 11007 / NBRC 100824 / MB4) (Thermoanaerobacter tengcongensis), this protein is SsrA-binding protein.